A 393-amino-acid polypeptide reads, in one-letter code: Formate-dependent phosphoribosylglycinamide formyltransferase (393 aa).

Residues 22-23 (EL) and Glu-82 contribute to the N(1)-(5-phospho-beta-D-ribosyl)glycinamide site. ATP-binding positions include Arg-114, Lys-155, 160-165 (SSGKGQ), 195-198 (EGFI), and Glu-203. One can recognise an ATP-grasp domain in the interval 119–308 (RLAAEELDLP…QFALHARAIL (190 aa)). Mg(2+)-binding residues include Glu-267 and Glu-279. N(1)-(5-phospho-beta-D-ribosyl)glycinamide-binding positions include Asp-286, Lys-356, and 363-364 (RR).

Belongs to the PurK/PurT family. As to quaternary structure, homodimer.

It catalyses the reaction N(1)-(5-phospho-beta-D-ribosyl)glycinamide + formate + ATP = N(2)-formyl-N(1)-(5-phospho-beta-D-ribosyl)glycinamide + ADP + phosphate + H(+). It functions in the pathway purine metabolism; IMP biosynthesis via de novo pathway; N(2)-formyl-N(1)-(5-phospho-D-ribosyl)glycinamide from N(1)-(5-phospho-D-ribosyl)glycinamide (formate route): step 1/1. Functionally, involved in the de novo purine biosynthesis. Catalyzes the transfer of formate to 5-phospho-ribosyl-glycinamide (GAR), producing 5-phospho-ribosyl-N-formylglycinamide (FGAR). Formate is provided by PurU via hydrolysis of 10-formyl-tetrahydrofolate. The chain is Formate-dependent phosphoribosylglycinamide formyltransferase from Pseudomonas entomophila (strain L48).